Reading from the N-terminus, the 609-residue chain is NADH-ubiquinone oxidoreductase chain 5 (609 aa).

16 consecutive transmembrane segments (helical) span residues 3 to 23 (VINL…LPIV), 46 to 66 (AFMI…EMII), 90 to 110 (MIFV…SMWY), 115 to 135 (PFIN…MILV), 140 to 160 (LFQL…LIGW), 174 to 194 (AVLY…WFLI), 216 to 236 (LMGL…HPWL), 244 to 264 (TPVS…FLLI), 276 to 296 (MQTT…ICAL), 304 to 323 (IIAF…IGIN), 328 to 350 (AFLH…GSII), 368 to 388 (VLPF…GMPF), 410 to 432 (WALL…IMFF), 460 to 480 (LLLG…PTST), 485 to 505 (MPYY…ILAL), and 585 to 605 (GLIK…LMMI).

It belongs to the complex I subunit 5 family.

Its subcellular location is the mitochondrion inner membrane. The catalysed reaction is a ubiquinone + NADH + 5 H(+)(in) = a ubiquinol + NAD(+) + 4 H(+)(out). Its function is as follows. Core subunit of the mitochondrial membrane respiratory chain NADH dehydrogenase (Complex I) that is believed to belong to the minimal assembly required for catalysis. Complex I functions in the transfer of electrons from NADH to the respiratory chain. The immediate electron acceptor for the enzyme is believed to be ubiquinone. The polypeptide is NADH-ubiquinone oxidoreductase chain 5 (MT-ND5) (Phoca vitulina (Harbor seal)).